Reading from the N-terminus, the 296-residue chain is Putative peptide transport system permease protein BRA1093/BS1330_II1085 (296 aa).

The next 6 membrane-spanning stretches (helical) occupy residues 35–55 (IGLV…WITN), 97–117 (LWIG…IGIA), 131–151 (VMDA…SAAL), 205–225 (ILPN…AYAI), 229–249 (ATLS…GSIV), and 260–280 (WWIM…INLI). The region spanning 97 to 281 (LWIGLTVAVL…ISALAINLIG (185 aa)) is the ABC transmembrane type-1 domain.

The protein belongs to the binding-protein-dependent transport system permease family. As to quaternary structure, the complex is composed of two ATP-binding proteins (BRA1094), two transmembrane proteins (BRA1092 and BRA1093) and a solute-binding protein (BRA1090).

It localises to the cell inner membrane. In terms of biological role, probably part of an ABC transporter complex that could be involved in peptide import. Probably responsible for the translocation of the substrate across the membrane. The sequence is that of Putative peptide transport system permease protein BRA1093/BS1330_II1085 from Brucella suis biovar 1 (strain 1330).